The sequence spans 602 residues: DEAD-box ATP-dependent RNA helicase 53 (602 aa).

Residues 33-43 (ASPLDPCRGPA) show a composition bias toward low complexity. Residues 33–76 (ASPLDPCRGPAAPEPPRRRAFHGSPSPLGFRSTPASWSSPEAGA) are disordered. Positions 84–112 (LEVARLGISPWIVERLAARGITRLFPIQR) match the Q motif motif. The Helicase ATP-binding domain occupies 115–288 (LDPAMQGKDM…SKYLKDPIII (174 aa)). 128 to 135 (ARTGTGKT) contributes to the ATP binding site. The short motif at 236–239 (DEAD) is the DEAD box element. Residues 317 to 462 (ILGPLIKEHA…LPKIEVADEA (146 aa)) enclose the Helicase C-terminal domain. The disordered stretch occupies residues 503 to 602 (FGDFDGFGSS…GRSGGFDDSN (100 aa)).

The protein belongs to the DEAD box helicase family. DDX21/DDX50 subfamily.

The enzyme catalyses ATP + H2O = ADP + phosphate + H(+). This chain is DEAD-box ATP-dependent RNA helicase 53, found in Oryza sativa subsp. japonica (Rice).